We begin with the raw amino-acid sequence, 262 residues long: Shikimate dehydrogenase (NADP(+)) (262 aa).

Shikimate is bound by residues 14 to 16 (SAS) and Thr-60. Lys-64 (proton acceptor) is an active-site residue. 2 residues coordinate shikimate: Asn-85 and Asp-100. Residues 121 to 125 (GAGGA), 145 to 150 (NRTAER), and Phe-203 each bind NADP(+). Tyr-205 contacts shikimate. Gly-227 is an NADP(+) binding site.

Belongs to the shikimate dehydrogenase family. As to quaternary structure, homodimer.

It catalyses the reaction shikimate + NADP(+) = 3-dehydroshikimate + NADPH + H(+). It participates in metabolic intermediate biosynthesis; chorismate biosynthesis; chorismate from D-erythrose 4-phosphate and phosphoenolpyruvate: step 4/7. Its function is as follows. Involved in the biosynthesis of the chorismate, which leads to the biosynthesis of aromatic amino acids. Catalyzes the reversible NADPH linked reduction of 3-dehydroshikimate (DHSA) to yield shikimate (SA). In Pyrobaculum aerophilum (strain ATCC 51768 / DSM 7523 / JCM 9630 / CIP 104966 / NBRC 100827 / IM2), this protein is Shikimate dehydrogenase (NADP(+)).